Reading from the N-terminus, the 140-residue chain is Protein ARABIDOPSIS THALIANA ANTHER 7 (140 aa).

A signal peptide spans 1-20 (MKIHAILVVAFLVLMKTAVS). 4 cysteine pairs are disulfide-bonded: cysteine 29–cysteine 87, cysteine 39–cysteine 54, cysteine 55–cysteine 111, and cysteine 85–cysteine 125.

Belongs to the plant LTP family. As to expression, tapetum-specific. Also present in pollen.

Its subcellular location is the endoplasmic reticulum lumen. The sequence is that of Protein ARABIDOPSIS THALIANA ANTHER 7 from Arabidopsis thaliana (Mouse-ear cress).